The sequence spans 108 residues: Zinc finger protein 475 (108 aa).

2 consecutive C2HC/C3H-type zinc fingers follow at residues 6–35 (PAVV…KWHN) and 79–108 (QLVP…KAAK). Zn(2+) contacts are provided by Cys-10, Cys-13, His-25, Cys-29, Cys-83, Cys-86, His-98, and Cys-102.

It depends on Zn(2+) as a cofactor.

The sequence is that of Zinc finger protein 475 from Homo sapiens (Human).